The chain runs to 522 residues: Cytochrome P450 9c1 (522 aa).

Heme is bound at residue Cys-464.

Belongs to the cytochrome P450 family. Requires heme as cofactor.

It localises to the endoplasmic reticulum membrane. The protein localises to the microsome membrane. May be involved in the metabolism of insect hormones and in the breakdown of synthetic insecticides. This chain is Cytochrome P450 9c1 (Cyp9c1), found in Drosophila melanogaster (Fruit fly).